The sequence spans 329 residues: BTB/POZ domain-containing protein At1g55760 (329 aa).

Positions 164–231 (TDITINASDG…IYGNIQNEDF (68 aa)) constitute a BTB domain.

It participates in protein modification; protein ubiquitination. May act as a substrate-specific adapter of an E3 ubiquitin-protein ligase complex (CUL3-RBX1-BTB) which mediates the ubiquitination and subsequent proteasomal degradation of target proteins. This is BTB/POZ domain-containing protein At1g55760 from Arabidopsis thaliana (Mouse-ear cress).